The primary structure comprises 42 residues: Photosystem I reaction center subunit IX (42 aa).

The helical transmembrane segment at 7–27 (YLSTAPVLAAIWFAILAGLLI) threads the bilayer.

It belongs to the PsaJ family.

It is found in the plastid. The protein resides in the chloroplast thylakoid membrane. Functionally, may help in the organization of the PsaE and PsaF subunits. The protein is Photosystem I reaction center subunit IX of Zygnema circumcarinatum (Green alga).